Reading from the N-terminus, the 364-residue chain is Peptide chain release factor 1 (364 aa).

N5-methylglutamine is present on glutamine 237.

This sequence belongs to the prokaryotic/mitochondrial release factor family. In terms of processing, methylated by PrmC. Methylation increases the termination efficiency of RF1.

The protein resides in the cytoplasm. In terms of biological role, peptide chain release factor 1 directs the termination of translation in response to the peptide chain termination codons UAG and UAA. This is Peptide chain release factor 1 from Rubrobacter xylanophilus (strain DSM 9941 / JCM 11954 / NBRC 16129 / PRD-1).